We begin with the raw amino-acid sequence, 452 residues long: Imidazoleglycerol-phosphate dehydratase (452 aa).

The segment at 1–233 (MASPVQALLL…VGASVVLTPG (233 aa)) is unknown activity. Residues 234–452 (LGELLDLVPA…GVPSTKGVLA (219 aa)) are imidazoleglycerol-phosphate dehydratase.

Belongs to the imidazoleglycerol-phosphate dehydratase family.

It catalyses the reaction D-erythro-1-(imidazol-4-yl)glycerol 3-phosphate = 3-(imidazol-4-yl)-2-oxopropyl phosphate + H2O. It participates in amino-acid biosynthesis; L-histidine biosynthesis; L-histidine from 5-phospho-alpha-D-ribose 1-diphosphate: step 6/9. In Phytophthora nicotianae (Potato buckeye rot agent), this protein is Imidazoleglycerol-phosphate dehydratase (HIS3).